Reading from the N-terminus, the 395-residue chain is Synaptotagmin-8 (395 aa).

Residues 1–44 (MQADRSMKMGHALNPFSTSAPLDATAGPSLIPDLITRIPWPRWT) lie on the Extracellular side of the membrane. The chain crosses the membrane as a helical; Signal-anchor for type III membrane protein span at residues 45–65 (LFIAILAAGVLLVSCLLCVIC). Over 66–395 (CYCHRHRHRK…PRLPLLRPRS (330 aa)) the chain is Cytoplasmic. C2 domains follow at residues 113 to 229 (QWGR…ESWY) and 241 to 370 (QMGE…AQWH).

This sequence belongs to the synaptotagmin family. Homodimer or homooligomer. Homodimerization and homooligomerization do not depend on Ca(2+). Interacts with SYNCRIP isoform 2 C-terminus. Binds inositol 1,3,4,5-tetrakisphosphate (IP4). Binds to AP2 in a Ca(2+)-independent manner. Interacts with STX1A, STX1B and STX2; the interaction is Ca(2+)-dependent. Ubiquitous. Detected in testis and brain. Expressed in primary neurons, neuroendocrine and endocrine cells.

Its subcellular location is the cytoplasm. The protein resides in the cell membrane. The protein localises to the cytoplasmic vesicle. It localises to the secretory vesicle. It is found in the acrosome. Functionally, involved in the trafficking and exocytosis of secretory vesicles in non-neuronal tissues. Mediates Ca(2+)-regulation of exocytosis acrosomal reaction in sperm. May mediate Ca(2+)-regulation of exocytosis in insulin secreted cells. The polypeptide is Synaptotagmin-8 (Syt8) (Mus musculus (Mouse)).